Consider the following 149-residue polypeptide: D-aminoacyl-tRNA deacylase (149 aa).

The short motif at 141–142 (GP) is the Gly-cisPro motif, important for rejection of L-amino acids element.

Belongs to the DTD family. As to quaternary structure, homodimer.

The protein localises to the cytoplasm. It catalyses the reaction glycyl-tRNA(Ala) + H2O = tRNA(Ala) + glycine + H(+). The enzyme catalyses a D-aminoacyl-tRNA + H2O = a tRNA + a D-alpha-amino acid + H(+). Functionally, an aminoacyl-tRNA editing enzyme that deacylates mischarged D-aminoacyl-tRNAs. Also deacylates mischarged glycyl-tRNA(Ala), protecting cells against glycine mischarging by AlaRS. Acts via tRNA-based rather than protein-based catalysis; rejects L-amino acids rather than detecting D-amino acids in the active site. By recycling D-aminoacyl-tRNA to D-amino acids and free tRNA molecules, this enzyme counteracts the toxicity associated with the formation of D-aminoacyl-tRNA entities in vivo and helps enforce protein L-homochirality. This is D-aminoacyl-tRNA deacylase from Hydrogenovibrio crunogenus (strain DSM 25203 / XCL-2) (Thiomicrospira crunogena).